The chain runs to 811 residues: Glycerol-3-phosphate acyltransferase (811 aa).

The HXXXXD motif motif lies at 309-314 (CHRSHM).

This sequence belongs to the GPAT/DAPAT family.

It localises to the cell inner membrane. It catalyses the reaction sn-glycerol 3-phosphate + an acyl-CoA = a 1-acyl-sn-glycero-3-phosphate + CoA. The protein operates within phospholipid metabolism; CDP-diacylglycerol biosynthesis; CDP-diacylglycerol from sn-glycerol 3-phosphate: step 1/3. The polypeptide is Glycerol-3-phosphate acyltransferase (Colwellia psychrerythraea (strain 34H / ATCC BAA-681) (Vibrio psychroerythus)).